The following is a 293-amino-acid chain: 4-hydroxy-tetrahydrodipicolinate synthase 1 (293 aa).

Thr46 contacts pyruvate. Tyr134 acts as the Proton donor/acceptor in catalysis. Lys162 acts as the Schiff-base intermediate with substrate in catalysis. Residue Ile204 coordinates pyruvate.

The protein belongs to the DapA family. In terms of assembly, homotetramer; dimer of dimers.

The protein resides in the cytoplasm. It carries out the reaction L-aspartate 4-semialdehyde + pyruvate = (2S,4S)-4-hydroxy-2,3,4,5-tetrahydrodipicolinate + H2O + H(+). It functions in the pathway amino-acid biosynthesis; L-lysine biosynthesis via DAP pathway; (S)-tetrahydrodipicolinate from L-aspartate: step 3/4. In terms of biological role, catalyzes the condensation of (S)-aspartate-beta-semialdehyde [(S)-ASA] and pyruvate to 4-hydroxy-tetrahydrodipicolinate (HTPA). The sequence is that of 4-hydroxy-tetrahydrodipicolinate synthase 1 from Clostridium acetobutylicum (strain ATCC 824 / DSM 792 / JCM 1419 / IAM 19013 / LMG 5710 / NBRC 13948 / NRRL B-527 / VKM B-1787 / 2291 / W).